The primary structure comprises 909 residues: Probable DNA-directed RNA polymerase subunit beta (909 aa).

It belongs to the RNA polymerase beta chain family.

It catalyses the reaction RNA(n) + a ribonucleoside 5'-triphosphate = RNA(n+1) + diphosphate. In terms of biological role, required for late and very late gene expression. May be a component of the novel RNA polymerase activity induced by baculovirus infection. This is Probable DNA-directed RNA polymerase subunit beta (LEF-8) from Lepidoptera (butterflies and moths).